Reading from the N-terminus, the 453-residue chain is Glutamyl-tRNA reductase (453 aa).

Residues 52 to 55 (TCNR), Ser-105, 110 to 112 (EDQ), and Gln-116 each bind substrate. Cys-53 functions as the Nucleophile in the catalytic mechanism. 184–189 (GAGEMA) is an NADP(+) binding site. Low complexity predominate over residues 413–424 (PGLEPEPTELPT). The segment at 413 to 453 (PGLEPEPTELPTVPDGPEGVPEELRERMSSGMLEQFSTNDD) is disordered.

The protein belongs to the glutamyl-tRNA reductase family. As to quaternary structure, homodimer.

The catalysed reaction is (S)-4-amino-5-oxopentanoate + tRNA(Glu) + NADP(+) = L-glutamyl-tRNA(Glu) + NADPH + H(+). It participates in porphyrin-containing compound metabolism; protoporphyrin-IX biosynthesis; 5-aminolevulinate from L-glutamyl-tRNA(Glu): step 1/2. In terms of biological role, catalyzes the NADPH-dependent reduction of glutamyl-tRNA(Glu) to glutamate 1-semialdehyde (GSA). This chain is Glutamyl-tRNA reductase, found in Natronomonas pharaonis (strain ATCC 35678 / DSM 2160 / CIP 103997 / JCM 8858 / NBRC 14720 / NCIMB 2260 / Gabara) (Halobacterium pharaonis).